The primary structure comprises 580 residues: Trafficking protein particle complex subunit 14 (580 aa).

Disordered stretches follow at residues 95-134 (GSAGDQDADPPGGGDPGGGGLFRGCSPLLTHGQGPATSGG) and 480-533 (VSHP…RSGS). Over residues 105 to 116 (PGGGDPGGGGLF) the composition is skewed to gly residues. The residue at position 491 (Ser491) is a Phosphoserine. Low complexity predominate over residues 492-502 (RKSSPSSPAVR). A compositionally biased stretch (polar residues) spans 512–525 (LGRSQSFSHQQPSR). The residue at position 517 (Ser517) is a Phosphoserine. The residue at position 541 (Thr541) is a Phosphothreonine. Ser546 carries the post-translational modification Phosphoserine.

As to quaternary structure, component of the multisubunit TRAPP II complex, which includes at least TRAPPC1, TRAPPC2, TRAPPC2L, TRAPPC3, TRAPPC4, TRAPPC5, TRAPPC6A/B, TRAPPC9, TRAPPC10 and TRAPPC14. TRAPPC9, TRAPPC10 and TRAPPC14 are specific subunits of the TRAPP II complex. Interacts with alpha-tubulin during mitosis. Interacts with RAB3IP (via the N-terminal region); this interaction mediates RAB3IP association with the TRAPP II complex. Interacts with TRAPPC10. Interacts with FBF1.

The protein localises to the cytoplasm. It is found in the cytoskeleton. The protein resides in the spindle. Its subcellular location is the vesicle. It localises to the midbody. Its function is as follows. Specific subunit of the TRAPP (transport protein particle) II complex, a highly conserved vesicle tethering complex that functions in late Golgi trafficking as a membrane tether. TRAPPC14 is dispensable for TRAPPII complex integrity but mediates RAB3IP preciliary vesicle trafficking to the mother centriole during ciliogenesis. Modulates YAP1 activity as transcriptional regulator. This chain is Trafficking protein particle complex subunit 14, found in Mus musculus (Mouse).